Reading from the N-terminus, the 422-residue chain is Aspartate--tRNA(Asp/Asn) ligase (422 aa).

Glu158 contributes to the L-aspartate binding site. The segment at 180 to 183 (QLYK) is aspartate. L-aspartate is bound at residue Arg201. ATP contacts are provided by residues 201–203 (RME), 209–211 (RHL), and Glu345. L-aspartate-binding residues include Ser348 and Arg352. 393-396 (GAER) lines the ATP pocket.

Belongs to the class-II aminoacyl-tRNA synthetase family. Type 2 subfamily. In terms of assembly, homodimer. Makes part of a ribonucleoprotein particle (RNP) called transamidosome that allows channelling of the aa-tRNA from non-discriminating aspartyl-tRNA synthetase active site to the GatCAB amidotransferase site. The transamidosome complex is formed by two GatCABs, one dimeric ND-AspRSs and two tRNAs(Asn) molecules.

It is found in the cytoplasm. It carries out the reaction tRNA(Asx) + L-aspartate + ATP = L-aspartyl-tRNA(Asx) + AMP + diphosphate. Functionally, aspartyl-tRNA synthetase with relaxed tRNA specificity since it is able to aspartylate not only its cognate tRNA(Asp) but also tRNA(Asn) with similar efficiencies. Reaction proceeds in two steps: L-aspartate is first activated by ATP to form Asp-AMP and then transferred to the acceptor end of tRNA(Asp/Asn). This Thermus thermophilus (strain ATCC 27634 / DSM 579 / HB8) protein is Aspartate--tRNA(Asp/Asn) ligase (aspS2).